We begin with the raw amino-acid sequence, 322 residues long: Sideroflexin-1 (322 aa).

S2 carries the post-translational modification N-acetylserine. Topologically, residues 2 to 102 (SGELPPNINI…MSAQVPMNMT (101 aa)) are mitochondrial matrix. A helical transmembrane segment spans residues 103–120 (ITGCMMTFYRTTPAVLFW). The Mitochondrial intermembrane segment spans residues 121–146 (QWINQSFNAVVNYTNRSGDAPLTVNE). A helical transmembrane segment spans residues 147-167 (LGTAYVSATTGAVATALGLNA). At 168-174 (LTKHVSP) the chain is on the mitochondrial matrix side. The helical transmembrane segment at 175–195 (LIGRFVPFAAVAAANCINIPL) threads the bilayer. Topologically, residues 196–228 (MRQRELRAGIPVTDENGNRLGESANAAKQAITQ) are mitochondrial intermembrane. Residues 229–249 (VVISRILMAAPGMAIPPFIMN) form a helical membrane-spanning segment. Topologically, residues 250-266 (TLEKKAFLKRFPWMSAP) are mitochondrial matrix. A helical transmembrane segment spans residues 267 to 287 (IQVGLVGFCLVFATPLCCALF). Topologically, residues 288-322 (PQKSSMSVTSLEAELQAKIRETSPELRRVYFNKGL) are mitochondrial intermembrane.

Belongs to the sideroflexin family.

The protein localises to the mitochondrion inner membrane. It carries out the reaction L-serine(in) = L-serine(out). The catalysed reaction is L-alanine(in) = L-alanine(out). The enzyme catalyses L-cysteine(in) = L-cysteine(out). In terms of biological role, amino acid transporter importing serine, an essential substrate of the mitochondrial branch of the one-carbon pathway, into mitochondria. Mitochondrial serine is then converted to glycine and formate, which exits to the cytosol where it is used to generate the charged folates that serve as one-carbon donors. May also transport other amino acids including alanine and cysteine. This is Sideroflexin-1 (SFXN1) from Sus scrofa (Pig).